Consider the following 57-residue polypeptide: Sperm protamine P1-type (57 aa).

Residues 1–57 are disordered; that stretch reads MARYRHNRSRSRSRHRRRRRGHRGGRYRRRRRRGRYGHRRHHRGHSRRRRKRRRSRH.

It belongs to the protamine P1 family. In terms of tissue distribution, testis.

The protein resides in the nucleus. Its subcellular location is the chromosome. Protamines substitute for histones in the chromatin of sperm during the haploid phase of spermatogenesis. They compact sperm DNA into a highly condensed, stable and inactive complex. This chain is Sperm protamine P1-type, found in Alligator mississippiensis (American alligator).